The chain runs to 257 residues: Transmembrane protein C257L (257 aa).

Transmembrane regions (helical) follow at residues 123–143 (LELL…FTAL) and 163–183 (MMIF…YVLV).

Belongs to the asfivirus C257R family.

The protein resides in the host membrane. Its subcellular location is the virion. The sequence is that of Transmembrane protein C257L from Ornithodoros (relapsing fever ticks).